We begin with the raw amino-acid sequence, 597 residues long: Arginine--tRNA ligase (597 aa).

Residues 125 to 135 carry the 'HIGH' region motif; that stretch reads PNTNKPLHLGH.

The protein belongs to the class-I aminoacyl-tRNA synthetase family. In terms of assembly, monomer.

The protein localises to the cytoplasm. The catalysed reaction is tRNA(Arg) + L-arginine + ATP = L-arginyl-tRNA(Arg) + AMP + diphosphate. The chain is Arginine--tRNA ligase from Porphyromonas gingivalis (strain ATCC BAA-308 / W83).